Consider the following 382-residue polypeptide: Chorismate synthase (382 aa).

Residues R39 and R45 each contribute to the NADP(+) site. The tract at residues 89–113 (SPEPGGEPRKKALTDARPGHADLTG) is disordered. The span at 94–108 (GEPRKKALTDARPGH) shows a compositional bias: basic and acidic residues. FMN is bound by residues 128-130 (RAS), 246-247 (QA), A290, 305-309 (KPIAT), and R331.

Belongs to the chorismate synthase family. Homotetramer. FMNH2 serves as cofactor.

It carries out the reaction 5-O-(1-carboxyvinyl)-3-phosphoshikimate = chorismate + phosphate. The protein operates within metabolic intermediate biosynthesis; chorismate biosynthesis; chorismate from D-erythrose 4-phosphate and phosphoenolpyruvate: step 7/7. Catalyzes the anti-1,4-elimination of the C-3 phosphate and the C-6 proR hydrogen from 5-enolpyruvylshikimate-3-phosphate (EPSP) to yield chorismate, which is the branch point compound that serves as the starting substrate for the three terminal pathways of aromatic amino acid biosynthesis. This reaction introduces a second double bond into the aromatic ring system. The sequence is that of Chorismate synthase from Deinococcus radiodurans (strain ATCC 13939 / DSM 20539 / JCM 16871 / CCUG 27074 / LMG 4051 / NBRC 15346 / NCIMB 9279 / VKM B-1422 / R1).